The following is a 249-amino-acid chain: Triosephosphate isomerase (249 aa).

9-11 (NWK) lines the substrate pocket. H95 (electrophile) is an active-site residue. E166 serves as the catalytic Proton acceptor. Substrate-binding positions include G172, S211, and 232–233 (GG).

It belongs to the triosephosphate isomerase family. Homodimer.

It localises to the cytoplasm. The catalysed reaction is D-glyceraldehyde 3-phosphate = dihydroxyacetone phosphate. It participates in carbohydrate biosynthesis; gluconeogenesis. The protein operates within carbohydrate degradation; glycolysis; D-glyceraldehyde 3-phosphate from glycerone phosphate: step 1/1. Involved in the gluconeogenesis. Catalyzes stereospecifically the conversion of dihydroxyacetone phosphate (DHAP) to D-glyceraldehyde-3-phosphate (G3P). This is Triosephosphate isomerase from Legionella pneumophila subsp. pneumophila (strain Philadelphia 1 / ATCC 33152 / DSM 7513).